Reading from the N-terminus, the 122-residue chain is MVRLFYNPIKYLFYRRSCKKRLRKALKKLNFYHPPKECCQIYRLLENAPGGTYFITENMTNELIMIAKDPVDKKIKSVKLYLTGNYIKINQHYYINIYMYLMRYNQIYKYPLICFSKYSKIL.

Belongs to the asfivirus MGF 100 family.

In terms of biological role, plays a role in virus cell tropism, and may be required for efficient virus replication in macrophages. The polypeptide is Protein MGF 100-1R (Ornithodoros (relapsing fever ticks)).